The primary structure comprises 166 residues: Lactose-binding lectin l-2 (166 aa).

A signal peptide spans 1–24 (MVSFKLPAFLCVAVLSSMALVSHG). Intrachain disulfides connect Cys34-Cys45, Cys62-Cys160, and Cys136-Cys152. A C-type lectin domain is found at 41–161 (HKNRCYLHVA…CDLLFPSICV (121 aa)).

In terms of assembly, homodimer; disulfide-linked. Skin; contained within club cells which are a component of the epidermis in combination with epithelial cells and mucus cells (at protein level).

It localises to the secreted. Functionally, involved in host defense at the body surface. Causes agglutination and suppresses the growth of the Gram-negative bacterium E.coli K12. Possesses calcium-independent hemagglutinating activity. The polypeptide is Lactose-binding lectin l-2 (Anguilla japonica (Japanese eel)).